Reading from the N-terminus, the 694-residue chain is LMBR1 domain-containing protein 2 homolog (694 aa).

Over 1-3 (MAY) the chain is Extracellular. The chain crosses the membrane as a helical span at residues 4–26 (LLSFGIVAALFLASISLYRYGNI). The Cytoplasmic segment spans residues 27 to 30 (PRQH). Residues 31–51 (ILVTLSVLTAWCFSFLIVFTI) traverse the membrane as a helical segment. Residues 52-106 (PLDVTSTLYRQCVEEHRPTPAPNVTNTSSATVGPPPQCQEPWGMVPASVFPNLWR) are Extracellular-facing. N-linked (GlcNAc...) asparagine glycans are attached at residues N74 and N77. A helical transmembrane segment spans residues 107-127 (IIYWSSQFLTWLIMPLMQSYL). Topologically, residues 128–144 (KAGDFTVKGKLKSALIE) are cytoplasmic. A helical transmembrane segment spans residues 145–165 (NAIYYGSYLFICGVLLIYIAV). The Extracellular portion of the chain corresponds to 166–181 (KGESLDWQKLKAIASS). The chain crosses the membrane as a helical span at residues 182-202 (ASNTWGLFLLILLLGYALVEV). The Cytoplasmic portion of the chain corresponds to 203–381 (PRSLWNNAKP…ECLLKAPFLK (179 aa)). Residues 222 to 249 (KAAKLSTEKAEAEEHVDDILESLQGLSR) are a coiled coil. A helical membrane pass occupies residues 382–402 (TMCVLTATMSAMVVWSELTFF). Topologically, residues 403 to 426 (SRHPVLSIFANVIYVAKESYDFFT) are extracellular. A helical membrane pass occupies residues 427-447 (IEVFSMVVLCYFFYCTYSTIL). Residues 448-467 (RIRFLNLYYLAPHHQTNEHS) are Cytoplasmic-facing. The chain crosses the membrane as a helical span at residues 468-488 (LIFSGMLLCRLTPPMCLNFLG). Residues 489–514 (LIHMDTHIIPNRIMETVYTQIMGHMD) are Extracellular-facing. The helical transmembrane segment at 515 to 535 (VIGIISNGFNIYFPMCMLAFC) threads the bilayer. At 536 to 694 (LATWFSLGSR…PPPRGLFDDV (159 aa)) the chain is on the cytoplasmic side. Residues 564–592 (ELVQEGKDLIAREKRRRQRAEEAMARRRD) are a coiled coil. The interval 673-694 (DYEAETDGRIVGPPPRGLFDDV) is disordered.

The protein belongs to the LIMR family.

It localises to the membrane. The polypeptide is LMBR1 domain-containing protein 2 homolog (Drosophila melanogaster (Fruit fly)).